Here is a 504-residue protein sequence, read N- to C-terminus: Cytochrome P450 2D9 (504 aa).

A Phosphoserine modification is found at serine 249. Cysteine 446 contributes to the heme binding site.

This sequence belongs to the cytochrome P450 family. It depends on heme as a cofactor.

The protein resides in the endoplasmic reticulum membrane. It localises to the microsome membrane. It catalyses the reaction an organic molecule + reduced [NADPH--hemoprotein reductase] + O2 = an alcohol + oxidized [NADPH--hemoprotein reductase] + H2O + H(+). Functionally, cytochromes P450 are a group of heme-thiolate monooxygenases. In liver microsomes, this enzyme is involved in an NADPH-dependent electron transport pathway. It oxidizes a variety of structurally unrelated compounds, including steroids, fatty acids, and xenobiotics. This is Cytochrome P450 2D9 (Cyp2d9) from Mus musculus (Mouse).